Reading from the N-terminus, the 404-residue chain is Odorant receptor 74a (404 aa).

Residues 1–38 (MSFHRYRPRLPGGELAPMPWPVSLYRVLNHVAWPLEAE) are Cytoplasmic-facing. A helical membrane pass occupies residues 39-59 (SGRWTVFLDRLMIFLGFLVFC). Residues 60–67 (EHNEVDFH) are Extracellular-facing. The helical transmembrane segment at 68–88 (YLIANRQDMDNMLTGLPTYLI) threads the bilayer. The Cytoplasmic portion of the chain corresponds to 89–141 (LVEMQIRCFQLAWHKDRFRALLQRFYAEIYVSEEMEPHLFASIQRQMLATRVN). A helical transmembrane segment spans residues 142 to 162 (STVYLLALLNFFLVPVTNVIY). Topologically, residues 163-181 (HRREMLYKQVYPFDNTQLH) are extracellular. The chain crosses the membrane as a helical span at residues 182–202 (FFIPLLVLNFWVGFIITSMLF). Residues 203–274 (GELNVMGELM…QRVEKEFTLR (72 aa)) lie on the Cytoplasmic side of the membrane. Residues 275–295 (IFVMFAFSAGLLCALFFKAFT) traverse the membrane as a helical segment. At 296-303 (NPWGNVAY) the chain is on the extracellular side. A helical transmembrane segment spans residues 304–324 (IVWFLAKFMELLALGMLGSIL). Over 325-380 (LKTTDELGMMYYTADWEQVIHQSDNVGENVKLMKLVTLAIQLNSRPFFITGLNYFR) the chain is Cytoplasmic. The chain crosses the membrane as a helical span at residues 381–401 (VSLTAVLKIIQGAFSYFTFLN). The Extracellular portion of the chain corresponds to 402-404 (SMR).

This sequence belongs to the insect chemoreceptor superfamily. Heteromeric odorant receptor channel (TC 1.A.69) family. Or1a subfamily. As to quaternary structure, interacts with Orco. Complexes exist early in the endomembrane system in olfactory sensory neurons (OSNs), coupling these complexes to the conserved ciliary trafficking pathway.

It localises to the cell membrane. Its function is as follows. Odorant receptor which mediates acceptance or avoidance behavior, depending on its substrates. The odorant receptor repertoire encodes a large collection of odor stimuli that vary widely in identity, intensity, and duration. May form a complex with Orco to form odorant-sensing units, providing sensitive and prolonged odorant signaling and calcium permeability. Involved in the behavioral responses to octanol, anisole, and 2-heptanone. The protein is Odorant receptor 74a (Or74a) of Drosophila melanogaster (Fruit fly).